A 269-amino-acid chain; its full sequence is MNRIHAVILDWAGTTVDFGSFAPTQIFVEAFRQAFDVEITLAEARVPMGLGKWQHIEALGKLPAVDARWQAKFGRAMSAADIDAIYAAFMPLQIAKVVDFSSPIAGVIDTIATLRAEGIKIGSCSGYPRAVMERLVPAAAGHGYCPDHWVATDDLAAGGRPGPWMALQNVIALGIDAVAHCVKVDDAAPGISEGLNAGMWTVGLAVSGNEFGATWDAYQTMSKEDVAVRREHAASKLYAAGAHYVVDSLADLPGVIAHINARLAQGERP.

The active-site Nucleophile is Asp-10. Residues Asp-10 and Ala-12 each coordinate Mg(2+). Lys-52 functions as the Schiff-base intermediate with substrate in the catalytic mechanism. Asp-186 serves as a coordination point for Mg(2+).

Belongs to the HAD-like hydrolase superfamily. PhnX family. Homodimer. Mg(2+) serves as cofactor.

It carries out the reaction phosphonoacetaldehyde + H2O = acetaldehyde + phosphate + H(+). Involved in phosphonate degradation. The chain is Phosphonoacetaldehyde hydrolase from Salmonella paratyphi A (strain ATCC 9150 / SARB42).